A 236-amino-acid polypeptide reads, in one-letter code: Rho-related GTP-binding protein RhoV (236 aa).

The disordered stretch occupies residues 1–27 (MPPRELSEAEPPPLRAPTPPPRRRSAP). Residues 10 to 20 (EPPPLRAPTPP) show a composition bias toward pro residues. S25 carries the post-translational modification Phosphoserine. GTP contacts are provided by residues 38 to 45 (GDGAVGKS), 85 to 89 (DTAGQ), and 143 to 146 (TQAD). C234 is lipidated: S-palmitoyl cysteine.

The protein belongs to the small GTPase superfamily. Rho family. In terms of assembly, interacts with PAK2. Requires Mg(2+) as cofactor. In terms of tissue distribution, highly expressed in pancreas, placenta, and fetal brain.

The protein localises to the cell membrane. It localises to the endosome membrane. Plays a role in the control of the actin cytoskeleton via activation of the JNK pathway. The polypeptide is Rho-related GTP-binding protein RhoV (Homo sapiens (Human)).